The primary structure comprises 60 residues: Putative transmembrane protein 74 (60 aa).

The next 2 helical transmembrane spans lie at 4-24 (FSVI…FLTF) and 35-55 (WVYI…YQAG).

It is found in the host membrane. The protein is Putative transmembrane protein 74 (SIFV0074) of Sulfolobus islandicus filamentous virus (isolate Iceland/Hveragerdi) (SIFV).